A 358-amino-acid chain; its full sequence is tRNA-specific 2-thiouridylase MnmA (358 aa).

Residues 10–17 (AMSGGVDS) and M36 contribute to the ATP site. The active-site Nucleophile is C105. The cysteines at positions 105 and 202 are disulfide-linked. G129 serves as a coordination point for ATP. Positions 152 to 154 (KDQ) are interaction with tRNA. C202 functions as the Cysteine persulfide intermediate in the catalytic mechanism. An interaction with tRNA region spans residues 308–309 (RY).

This sequence belongs to the MnmA/TRMU family.

It is found in the cytoplasm. It carries out the reaction S-sulfanyl-L-cysteinyl-[protein] + uridine(34) in tRNA + AH2 + ATP = 2-thiouridine(34) in tRNA + L-cysteinyl-[protein] + A + AMP + diphosphate + H(+). In terms of biological role, catalyzes the 2-thiolation of uridine at the wobble position (U34) of tRNA, leading to the formation of s(2)U34. This Magnetococcus marinus (strain ATCC BAA-1437 / JCM 17883 / MC-1) protein is tRNA-specific 2-thiouridylase MnmA.